Reading from the N-terminus, the 153-residue chain is Histone H2B.3 (153 aa).

The segment covering 1–28 (MAPKADKKPAAKKPAEEEPATEKAEKAP) has biased composition (basic and acidic residues). The tract at residues 1–60 (MAPKADKKPAAKKPAEEEPATEKAEKAPAGKKPKAEKRLPAGKSAGKEGGEGKKGKKKAK) is disordered. N6-acetyllysine occurs at positions 7 and 37. Lys-149 is covalently cross-linked (Glycyl lysine isopeptide (Lys-Gly) (interchain with G-Cter in ubiquitin)).

Belongs to the histone H2B family. As to quaternary structure, the nucleosome is a histone octamer containing two molecules each of H2A, H2B, H3 and H4 assembled in one H3-H4 heterotetramer and two H2A-H2B heterodimers. The octamer wraps approximately 147 bp of DNA. Post-translationally, can be acetylated to form H2BK6ac and H2BK33ac. In terms of processing, monoubiquitinated to form H2BK143ub1; may give a specific tag for epigenetic transcriptional activation.

It localises to the nucleus. Its subcellular location is the chromosome. Functionally, core component of nucleosome. Nucleosomes wrap and compact DNA into chromatin, limiting DNA accessibility to the cellular machineries which require DNA as a template. Histones thereby play a central role in transcription regulation, DNA repair, DNA replication and chromosomal stability. DNA accessibility is regulated via a complex set of post-translational modifications of histones, also called histone code, and nucleosome remodeling. The chain is Histone H2B.3 from Zea mays (Maize).